Reading from the N-terminus, the 248-residue chain is Cell division protein ZapD (248 aa).

The protein belongs to the ZapD family. As to quaternary structure, interacts with FtsZ.

The protein localises to the cytoplasm. In terms of biological role, cell division factor that enhances FtsZ-ring assembly. Directly interacts with FtsZ and promotes bundling of FtsZ protofilaments, with a reduction in FtsZ GTPase activity. In Aliivibrio salmonicida (strain LFI1238) (Vibrio salmonicida (strain LFI1238)), this protein is Cell division protein ZapD.